Reading from the N-terminus, the 657-residue chain is Glycogen debranching enzyme (657 aa).

Asp-336 functions as the Nucleophile in the catalytic mechanism. The active-site Proton donor is the Glu-371. Residues 460–479 (ANGEENRDGTNNNYSNNHGK) are disordered.

This sequence belongs to the glycosyl hydrolase 13 family.

The catalysed reaction is Hydrolysis of (1-&gt;6)-alpha-D-glucosidic linkages to branches with degrees of polymerization of three or four glucose residues in limit dextrin.. The protein operates within glycan degradation; glycogen degradation. Removes maltotriose and maltotetraose chains that are attached by 1,6-alpha-linkage to the limit dextrin main chain, generating a debranched limit dextrin. This chain is Glycogen debranching enzyme, found in Shigella dysenteriae serotype 1 (strain Sd197).